The following is a 102-amino-acid chain: Monothiol glutaredoxin-S8 (102 aa).

One can recognise a Glutaredoxin domain in the interval 1 to 101; it reads MEKIQKMISE…PMLKRFGALW (101 aa). Cys-21 contacts [2Fe-2S] cluster. The Responsive for interaction with TGA factors signature appears at 99-102; it reads ALWL.

The protein belongs to the glutaredoxin family. CC-type subfamily.

Its subcellular location is the cytoplasm. It localises to the nucleus. In terms of biological role, may only reduce GSH-thiol disulfides, but not protein disulfides. This Arabidopsis thaliana (Mouse-ear cress) protein is Monothiol glutaredoxin-S8 (GRXS8).